The following is a 292-amino-acid chain: Protein SETSIP (292 aa).

The span at 1-11 (MAPKRQSPLPL) shows a compositional bias: low complexity. Disordered regions lie at residues 1–43 (MAPK…EQQE) and 158–292 (LNES…GEDD). Residues 35-78 (KKGEKEQQEAIEHIDEVQNEIDRLNEQDSEEILKVEQKYNKLRQ) adopt a coiled-coil conformation. Positions 237-292 (DMDDEEGGEDDDDDDDDGDEGEEELEDIDEGDEDEGEEDEDDDEGEEGEEDEGEDD) are enriched in acidic residues.

Belongs to the nucleosome assembly protein (NAP) family. Expressed in endothelial cell (EC) and protein-induced pluripotent stem (PiPS) endothelial cell (EC) (at protein level).

The protein localises to the cytoplasm. It localises to the nucleus. Plays a role as a transcriptional activator involved in the early stage of somatic cell reprogramming. Promotes the differentiation of protein-induced pluripotent stem (PiPS) cells into endothelial cells and the formation of vascular-like tubes (in vitro). Involved in the transcription induction of vascular endothelial-cadherin (VE-cadherin) expression. Associates to the VE-cadherin gene promoter. This chain is Protein SETSIP (SETSIP), found in Homo sapiens (Human).